The sequence spans 389 residues: MGNQSTKSTHGTTRVSHSKSAHHNSSRVTSDVIPRSASAISSHERFFSDSQSSSPPAVCPVSAPGKYRNFPGKDVPPICLTDEYNNSDDEVFCSTRTSKQSPLATGCPRQNLGSPGNRRSVDSTNSDLLEAVTPRSHISVKRTVSSGTEHAPDHANMQKSSSLKFTRPGVRSETKETTPSTSSNPTMFPCIHQFLHLTQPQILFVRKTWNHARNQGALEPAISIFRNSFFKNPEIRQMIMFGTKNEGHERLKKHAQLFTVLMDDLIANLDSPSATVAGLREAGEKHVWPTRNQYGCPFHAHLLDQFATAMIERTLEWGEKKDRTETTQRGWTKIVLFVTEQLKEGFQDEQKRARRIKAQIKTSAGSSSFEISTKTKQSDMKRFHTLDNM.

Residues 1–15 show a composition bias toward polar residues; that stretch reads MGNQSTKSTHGTTRV. 3 disordered regions span residues 1-38, 96-123, and 143-185; these read MGNQ…RSAS, RTSK…SVDS, and TVSS…SSNP. The segment covering 16-25 has biased composition (basic residues); that stretch reads SHSKSAHHNS. Residues 196-347 enclose the Globin domain; it reads HLTQPQILFV…VTEQLKEGFQ (152 aa). His-254 and His-286 together coordinate heme b. The segment at 367-389 is disordered; the sequence is SSFEISTKTKQSDMKRFHTLDNM. A compositionally biased stretch (basic and acidic residues) spans 376–389; it reads KQSDMKRFHTLDNM.

It belongs to the globin family. In terms of tissue distribution, expressed in the head and tail neurons and nerve cord.

In terms of biological role, may play a role as physiological sensor for oxygen via redox signaling and/or electron transport. This Caenorhabditis elegans protein is Globin-like protein 6.